The chain runs to 469 residues: Cysteine--tRNA ligase (469 aa).

C33 is a binding site for Zn(2+). A 'HIGH' region motif is present at residues 35 to 45 (ATVQGLPHIGH). 3 residues coordinate Zn(2+): C211, H236, and E240. Residues 267 to 271 (KMSKS) carry the 'KMSKS' region motif. Residue K270 coordinates ATP.

It belongs to the class-I aminoacyl-tRNA synthetase family. Monomer. The cofactor is Zn(2+).

It is found in the cytoplasm. The catalysed reaction is tRNA(Cys) + L-cysteine + ATP = L-cysteinyl-tRNA(Cys) + AMP + diphosphate. This chain is Cysteine--tRNA ligase (cysS), found in Mycobacterium tuberculosis (strain CDC 1551 / Oshkosh).